The following is a 391-amino-acid chain: Phosphoglycerate kinase (391 aa).

Substrate contacts are provided by residues 21-23, Arg-36, 59-62, Arg-113, and Arg-146; these read DLN and HLGR. ATP contacts are provided by residues Lys-197, Glu-319, and 345-348; that span reads GGDT.

It belongs to the phosphoglycerate kinase family. As to quaternary structure, monomer.

It localises to the cytoplasm. The catalysed reaction is (2R)-3-phosphoglycerate + ATP = (2R)-3-phospho-glyceroyl phosphate + ADP. It participates in carbohydrate degradation; glycolysis; pyruvate from D-glyceraldehyde 3-phosphate: step 2/5. In Shewanella denitrificans (strain OS217 / ATCC BAA-1090 / DSM 15013), this protein is Phosphoglycerate kinase.